We begin with the raw amino-acid sequence, 285 residues long: Diaminopimelate epimerase (285 aa).

Substrate contacts are provided by Asn15 and Asn68. Cys77 functions as the Proton donor in the catalytic mechanism. Substrate-binding positions include 78–79 (GN), Asn165, Asn201, and 219–220 (ER). Cys228 acts as the Proton acceptor in catalysis. Residue 229–230 (GT) coordinates substrate.

This sequence belongs to the diaminopimelate epimerase family. In terms of assembly, homodimer.

The protein resides in the cytoplasm. The catalysed reaction is (2S,6S)-2,6-diaminopimelate = meso-2,6-diaminopimelate. The protein operates within amino-acid biosynthesis; L-lysine biosynthesis via DAP pathway; DL-2,6-diaminopimelate from LL-2,6-diaminopimelate: step 1/1. Catalyzes the stereoinversion of LL-2,6-diaminopimelate (L,L-DAP) to meso-diaminopimelate (meso-DAP), a precursor of L-lysine and an essential component of the bacterial peptidoglycan. The protein is Diaminopimelate epimerase of Synechococcus sp. (strain JA-2-3B'a(2-13)) (Cyanobacteria bacterium Yellowstone B-Prime).